The sequence spans 371 residues: uncharacterized protein (371 aa).

Belongs to the glycerate kinase type-1 family.

This is an uncharacterized protein from Synechocystis sp. (strain ATCC 27184 / PCC 6803 / Kazusa).